We begin with the raw amino-acid sequence, 207 residues long: Small ribosomal subunit protein uS3c (207 aa).

The 71-residue stretch at 39-109 folds into the KH type-2 domain; the sequence is IRDYIFTNLL…QLKINIIDVT (71 aa).

Belongs to the universal ribosomal protein uS3 family. In terms of assembly, part of the 30S ribosomal subunit.

The protein resides in the plastid. Its subcellular location is the chloroplast. The sequence is that of Small ribosomal subunit protein uS3c (rps3) from Cyanidium caldarium (Red alga).